A 539-amino-acid chain; its full sequence is Membrane protein insertase YidC (539 aa).

A run of 5 helical transmembrane segments spans residues 6–26, 341–361, 416–436, 454–474, and 495–515; these read TLLV…WQVA, SVIQ…TFIV, LGGC…YWAL, LSAQ…MFLI, and PVMF…YWLV.

It belongs to the OXA1/ALB3/YidC family. Type 1 subfamily. In terms of assembly, interacts with the Sec translocase complex via SecD. Specifically interacts with transmembrane segments of nascent integral membrane proteins during membrane integration.

It is found in the cell inner membrane. Required for the insertion and/or proper folding and/or complex formation of integral membrane proteins into the membrane. Involved in integration of membrane proteins that insert both dependently and independently of the Sec translocase complex, as well as at least some lipoproteins. Aids folding of multispanning membrane proteins. The polypeptide is Membrane protein insertase YidC (Vibrio vulnificus (strain CMCP6)).